Consider the following 1004-residue polypeptide: Putative helicase MOV-10 (1004 aa).

K148 bears the N6-acetyllysine mark. T254 carries the phosphothreonine modification. At S433 the chain carries Phosphoserine. ATP is bound at residue 525 to 532 (GPPGTGKT). The DEAG box signature appears at 646–649 (DEAG). The segment at 922–966 (NPLLLGHDPDWKTFLEFCKENGGYTGCPFPAKLDLQQGQDLLQGL) is interaction with AGO2 and APOBEC3G. The segment at 966 to 1004 (LSKLSPSTSGPRRHQNLPQEREGEGGLPLQVEPEWRNEL) is disordered. Phosphoserine is present on S970.

Belongs to the DNA2/NAM7 helicase family. SDE3 subfamily. As to quaternary structure, interacts with DICER1, AGO2, TARBP2, EIF6 and RPL7A (60S ribosome subunit); they form a large RNA-induced silencing complex (RISC). Interacts with APOBEC3G in an RNA-dependent manner. Interacts with TRIM71 (via NHL repeats) in an RNA-dependent manner. Interacts with both protein products of LIRE1, ORF1p and ORF2p. Interacts with TUT4 and, to a lesser extent, TUT7; the interactions are RNA-dependent. Interacts with AGO2, TNRC6B and UPF1; the interactions are direct and RNA-dependent. Interacts with FMR1; this interaction is direct, occurs in an RNA-dependent manner on polysomes and induces association of MOV10 with RNAs. Interacts with SHFL; the interaction increases in presence of RNA. Interacts with DHX34; the interaction is RNA-independent. Interacts with RBM46. In terms of processing, ubiquitinated by the DCX(DCAF12) complex that specifically recognizes the glutamate-leucine (Glu-Leu) degron at the C-terminus, leading to its degradation.

The protein localises to the cytoplasm. It localises to the P-body. It is found in the nucleus. Its subcellular location is the cytoplasmic ribonucleoprotein granule. The protein resides in the stress granule. It catalyses the reaction ATP + H2O = ADP + phosphate + H(+). Functionally, 5' to 3' RNA helicase that is involved in a number of cellular roles ranging from mRNA metabolism and translation, modulation of viral infectivity, inhibition of retrotransposition, or regulation of synaptic transmission. Plays an important role in innate antiviral immunity by promoting type I interferon production. Mechanistically, specifically uses IKKepsilon/IKBKE as the mediator kinase for IRF3 activation. Contributes to UPF1 mRNA target degradation by translocation along 3' UTRs. Required for microRNA (miRNA)-mediated gene silencing by the RNA-induced silencing complex (RISC). Required for both miRNA-mediated translational repression and miRNA-mediated cleavage of complementary mRNAs by RISC. In cooperation with FMR1, regulates miRNA-mediated translational repression by AGO2. Restricts retrotransposition of long interspersed element-1 (LINE-1) in cooperation with TUT4 and TUT7 counteracting the RNA chaperonne activity of L1RE1. Facilitates LINE-1 uridylation by TUT4 and TUT7. Required for embryonic viability and for normal central nervous system development and function. Plays two critical roles in early brain development: suppresses retroelements in the nucleus by directly inhibiting cDNA synthesis, while regulates cytoskeletal mRNAs to influence neurite outgrowth in the cytosol. May function as a messenger ribonucleoprotein (mRNP) clearance factor. In Mus musculus (Mouse), this protein is Putative helicase MOV-10 (Mov10).